A 747-amino-acid chain; its full sequence is Cysteine--tRNA ligase, cytoplasmic (747 aa).

The tract at residues 1 to 26 (MTESWEQGKGRRTQPPWSAPNTNEQP) is disordered. A compositionally biased stretch (polar residues) spans 15-25 (PPWSAPNTNEQ). Residue Cys54 participates in Zn(2+) binding. Gly55 is an L-cysteine binding site. A 'HIGH' region motif is present at residues 56–66 (PTVYDASHMGH). An L-cysteine-binding site is contributed by Thr95. The 'KIIK' region signature appears at 100–103 (KIIK). Positions 347, 372, and 376 each coordinate Zn(2+). Residue His372 participates in L-cysteine binding. Positions 405 to 409 (KMSKS) match the 'KMSKS' region motif. An ATP-binding site is contributed by Lys408. Basic and acidic residues predominate over residues 651–683 (EEKRKAEEEKQRKKEEAARKKQQQEAAKLEKMK). Disordered regions lie at residues 651–685 (EEKRKAEEEKQRKKEEAARKKQQQEAAKLEKMKIS) and 700–721 (FDESGFPTHDTEGKELSKGQTK).

Belongs to the class-I aminoacyl-tRNA synthetase family. In terms of assembly, homodimer. Zn(2+) serves as cofactor.

The protein localises to the cytoplasm. The enzyme catalyses tRNA(Cys) + L-cysteine + ATP = L-cysteinyl-tRNA(Cys) + AMP + diphosphate. Catalyzes the ATP-dependent ligation of cysteine to tRNA(Cys). The chain is Cysteine--tRNA ligase, cytoplasmic (cars1) from Xenopus laevis (African clawed frog).